The following is a 232-amino-acid chain: MAQTKREKAIKAAVVPGKAYAFEDAINILKSATKAKFVESIDVAVRLGVDAKKSDQQVRGSTVLPAGTGKSVRVAVFAPAGAKADEALAAGAEAVGMDDLAEKMQAGDLNYDVVIATPDAMRVVGKLGTVLGPRGLMPNPKVGTVSPNPGEAVKNAKSGQVRYRTDKAGIIHCTIGKADFAEDALKSNLTALLLDLIKAKPATSKGTYLQKVSVSSTMGPGVTVDQSSLTLK.

The protein belongs to the universal ribosomal protein uL1 family. As to quaternary structure, part of the 50S ribosomal subunit.

Functionally, binds directly to 23S rRNA. The L1 stalk is quite mobile in the ribosome, and is involved in E site tRNA release. Protein L1 is also a translational repressor protein, it controls the translation of the L11 operon by binding to its mRNA. This is Large ribosomal subunit protein uL1 from Stenotrophomonas maltophilia (strain K279a).